The following is a 338-amino-acid chain: Anthranilate phosphoribosyltransferase (338 aa).

Residues Gly-81, 84–85 (GD), Thr-89, 91–94 (NIST), 109–117 (KHGNRGVSS), and Ser-121 contribute to the 5-phospho-alpha-D-ribose 1-diphosphate site. An anthranilate-binding site is contributed by Gly-81. Ser-93 serves as a coordination point for Mg(2+). Residue Asn-112 coordinates anthranilate. Arg-167 contributes to the anthranilate binding site. The Mg(2+) site is built by Asp-225 and Glu-226.

Belongs to the anthranilate phosphoribosyltransferase family. As to quaternary structure, homodimer. The cofactor is Mg(2+).

It carries out the reaction N-(5-phospho-beta-D-ribosyl)anthranilate + diphosphate = 5-phospho-alpha-D-ribose 1-diphosphate + anthranilate. The protein operates within amino-acid biosynthesis; L-tryptophan biosynthesis; L-tryptophan from chorismate: step 2/5. Its function is as follows. Catalyzes the transfer of the phosphoribosyl group of 5-phosphorylribose-1-pyrophosphate (PRPP) to anthranilate to yield N-(5'-phosphoribosyl)-anthranilate (PRA). The chain is Anthranilate phosphoribosyltransferase from Methanoculleus marisnigri (strain ATCC 35101 / DSM 1498 / JR1).